Consider the following 262-residue polypeptide: Translation initiation factor 2 subunit alpha (262 aa).

The region spanning 15–86 (GELVVGTVHK…RKGHVDVSMK (72 aa)) is the S1 motif domain.

This sequence belongs to the eIF-2-alpha family. Heterotrimer composed of an alpha, a beta and a gamma chain.

In terms of biological role, eIF-2 functions in the early steps of protein synthesis by forming a ternary complex with GTP and initiator tRNA. The sequence is that of Translation initiation factor 2 subunit alpha (eif2a) from Methanothermobacter thermautotrophicus (strain ATCC 29096 / DSM 1053 / JCM 10044 / NBRC 100330 / Delta H) (Methanobacterium thermoautotrophicum).